Reading from the N-terminus, the 129-residue chain is Phosphoribosyl-AMP cyclohydrolase (129 aa).

Asp94 lines the Mg(2+) pocket. Cys95 is a Zn(2+) binding site. Mg(2+) is bound by residues Asp96 and Asp98. 2 residues coordinate Zn(2+): Cys111 and Cys118.

It belongs to the PRA-CH family. As to quaternary structure, homodimer. It depends on Mg(2+) as a cofactor. Zn(2+) serves as cofactor.

It is found in the cytoplasm. It catalyses the reaction 1-(5-phospho-beta-D-ribosyl)-5'-AMP + H2O = 1-(5-phospho-beta-D-ribosyl)-5-[(5-phospho-beta-D-ribosylamino)methylideneamino]imidazole-4-carboxamide. It participates in amino-acid biosynthesis; L-histidine biosynthesis; L-histidine from 5-phospho-alpha-D-ribose 1-diphosphate: step 3/9. Functionally, catalyzes the hydrolysis of the adenine ring of phosphoribosyl-AMP. This chain is Phosphoribosyl-AMP cyclohydrolase, found in Corynebacterium efficiens (strain DSM 44549 / YS-314 / AJ 12310 / JCM 11189 / NBRC 100395).